The chain runs to 849 residues: MPSGAQGNTQSAAYKRIVNVSRNFQFKAALNKDTREWTFQHRSSGTALYSAIASLGDPSSPWDAVYVASPGPVQISEGNDHTVETKIDEAAVVHRSSSIVISPEDQEIFLKKATEYYRKKNIEADIVPVWGKVQRVPQAKSSSATITPSVSNKLSTAYQSIKSEALKDGPMYADSVLWDVLHYRIPTLDGYQQHNLWKNFTRWSQYFADNIVSNYRPGDLILIHDYSLFLLPRLIRKQLSDAPIVFFLHAPFCTSEVFRCLSKRAEILKGVLASNVIAMQTDSYTRHFLSTCSNVLGLETTSTHIDTSDGFRVVVFSSHVSIDVPRVYSRCNSKPVSLKIQQLKSLYPSDKKLIVGRDQLTKACGVTHKLRAFRELLIHFPKWRGHVVLIQITSLPVGNNYSNEELKKTENLVAQINSEFGSLDYTPVIHFHQLLDPDEYYALLSVANIACVSSVRDSMNTMALEYVACQQKNKGSLILSEFSGTAELLLSAYLVNPYDYSRFAETINYCLNMTEKERERRFSSLWKQATSQSSQQWIYKLINRAAYEVKALESHMTTPLLTYNILIKPYRNAKRRLFLLDYDGTLIESARNSIDAVPTDRLLRTLKRLASDSRNIVWILSGRSQKFMEEWMGDISELGLSSEHGSAIRPPLAGSWSSCAENLDLSWKDTVRDFFQYYVERTPGSYIEEKKHSISWCYQNANTTYSKFQSLECQTNLEDMLKHYDVEISPAKSFLEVHPNYLNKGSIVRRILKRSGSVDFVFCAGDDKTDENMFEVFLPTAFSNSHLIDEIDSTEYSGSHHTDDNSDANKVENVKVATFRVHIGLTDKPTLSDYHLPAPRDLGELLHNL.

The segment at 1 to 558 (MPSGAQGNTQ…VKALESHMTT (558 aa)) is glycosyltransferase.

It in the N-terminal section; belongs to the glycosyltransferase 20 family. The protein in the C-terminal section; belongs to the trehalose phosphatase family. Mg(2+) serves as cofactor.

It is found in the cytoplasm. It localises to the nucleus. The enzyme catalyses alpha,alpha-trehalose 6-phosphate + H2O = alpha,alpha-trehalose + phosphate. The protein operates within carbohydrate biosynthesis. Phosphatase catalytic subunit of the trehalose synthase complex that catalyzes the production of trehalose from glucose-6-phosphate and UDP-glucose in a two step process. The sequence is that of Trehalose-phosphatase (tps2) from Schizosaccharomyces pombe (strain 972 / ATCC 24843) (Fission yeast).